We begin with the raw amino-acid sequence, 255 residues long: tRNA (guanine-N(7)-)-methyltransferase (255 aa).

The interval 1–35 (MTRTNDASGGGKLPRKRFYRARAHSNPLSDSHFPV) is disordered. The span at 13-23 (LPRKRFYRARA) shows a compositional bias: basic residues. Residues G75, 98-99 (EL), 131-132 (NS), and L151 contribute to the S-adenosyl-L-methionine site. The active site involves D154. Position 229–231 (229–231 (TEE)) interacts with S-adenosyl-L-methionine.

It belongs to the class I-like SAM-binding methyltransferase superfamily. TrmB family.

Its subcellular location is the nucleus. The enzyme catalyses guanosine(46) in tRNA + S-adenosyl-L-methionine = N(7)-methylguanosine(46) in tRNA + S-adenosyl-L-homocysteine. It participates in tRNA modification; N(7)-methylguanine-tRNA biosynthesis. In terms of biological role, catalyzes the formation of N(7)-methylguanine at position 46 (m7G46) in tRNA. In Zea mays (Maize), this protein is tRNA (guanine-N(7)-)-methyltransferase.